A 267-amino-acid chain; its full sequence is uncharacterized protein (267 aa).

Positions 58–90 (RHTDDKQEKNQNEGEDNQKGENKTTDQQDGPKK) are disordered. Transmembrane regions (helical) follow at residues 101–121 (IYVL…LSQM) and 226–246 (GMTT…AWLG).

The protein resides in the membrane. This is an uncharacterized protein from Caenorhabditis elegans.